The following is a 152-amino-acid chain: Deoxyuridine 5'-triphosphate nucleotidohydrolase (152 aa).

Substrate-binding positions include 71–73, asparagine 84, 88–90, and methionine 98; these read RSG and LID.

It belongs to the dUTPase family. Mg(2+) serves as cofactor.

The enzyme catalyses dUTP + H2O = dUMP + diphosphate + H(+). The protein operates within pyrimidine metabolism; dUMP biosynthesis; dUMP from dCTP (dUTP route): step 2/2. This enzyme is involved in nucleotide metabolism: it produces dUMP, the immediate precursor of thymidine nucleotides and it decreases the intracellular concentration of dUTP so that uracil cannot be incorporated into DNA. In Aeromonas salmonicida (strain A449), this protein is Deoxyuridine 5'-triphosphate nucleotidohydrolase.